The sequence spans 242 residues: MTTVSMRDMLQAGVHFGHQTRYWNPKMKPFIFGARNGVHIINLEHTVPMFNEALAFISNVASKKGKVLFVGTKRAAGEAIKEAAISCDQYYVDHRWLGGMLTNWKTVRQSIKRLKELESQSVDGTFDKLTKKEALMRTRELEKLEKSLGGIKNMGGLPDVLFVIGADHEHIAIKEANNLGIPVVAVVDTNSAPDGVNYIVPGNDDAMRAIRLYTTSVAAAANAGRGQDLAVQAEQDGFVEAE.

The protein belongs to the universal ribosomal protein uS2 family.

This Shewanella oneidensis (strain ATCC 700550 / JCM 31522 / CIP 106686 / LMG 19005 / NCIMB 14063 / MR-1) protein is Small ribosomal subunit protein uS2.